We begin with the raw amino-acid sequence, 127 residues long: Glycine cleavage system H protein (127 aa).

Residues 22–104 form the Lipoyl-binding domain; that stretch reads EVVIGITHFA…YEGAWMVKVE (83 aa). Position 63 is an N6-lipoyllysine (Lys-63).

Belongs to the GcvH family. As to quaternary structure, the glycine cleavage system is composed of four proteins: P, T, L and H. (R)-lipoate serves as cofactor.

Its function is as follows. The glycine cleavage system catalyzes the degradation of glycine. The H protein shuttles the methylamine group of glycine from the P protein to the T protein. Is also involved in protein lipoylation via its role as an octanoyl/lipoyl carrier protein intermediate. The sequence is that of Glycine cleavage system H protein from Bacillus cereus (strain B4264).